Reading from the N-terminus, the 356-residue chain is UDP-N-acetylglucosamine--N-acetylmuramyl-(pentapeptide) pyrophosphoryl-undecaprenol N-acetylglucosamine transferase (356 aa).

UDP-N-acetyl-alpha-D-glucosamine-binding positions include 12–14 (TGG), asparagine 124, arginine 163, serine 188, isoleucine 242, and glutamine 287.

Belongs to the glycosyltransferase 28 family. MurG subfamily.

The protein resides in the cell inner membrane. It catalyses the reaction di-trans,octa-cis-undecaprenyl diphospho-N-acetyl-alpha-D-muramoyl-L-alanyl-D-glutamyl-meso-2,6-diaminopimeloyl-D-alanyl-D-alanine + UDP-N-acetyl-alpha-D-glucosamine = di-trans,octa-cis-undecaprenyl diphospho-[N-acetyl-alpha-D-glucosaminyl-(1-&gt;4)]-N-acetyl-alpha-D-muramoyl-L-alanyl-D-glutamyl-meso-2,6-diaminopimeloyl-D-alanyl-D-alanine + UDP + H(+). The protein operates within cell wall biogenesis; peptidoglycan biosynthesis. Functionally, cell wall formation. Catalyzes the transfer of a GlcNAc subunit on undecaprenyl-pyrophosphoryl-MurNAc-pentapeptide (lipid intermediate I) to form undecaprenyl-pyrophosphoryl-MurNAc-(pentapeptide)GlcNAc (lipid intermediate II). This is UDP-N-acetylglucosamine--N-acetylmuramyl-(pentapeptide) pyrophosphoryl-undecaprenol N-acetylglucosamine transferase from Pseudomonas syringae pv. tomato (strain ATCC BAA-871 / DC3000).